The sequence spans 226 residues: 3-isopropylmalate dehydratase small subunit (226 aa).

A disordered region spans residues 204-226; that stretch reads EAETVESAREPEAVEWAGPLADR.

This sequence belongs to the LeuD family. LeuD type 1 subfamily. In terms of assembly, heterodimer of LeuC and LeuD.

The catalysed reaction is (2R,3S)-3-isopropylmalate = (2S)-2-isopropylmalate. The protein operates within amino-acid biosynthesis; L-leucine biosynthesis; L-leucine from 3-methyl-2-oxobutanoate: step 2/4. In terms of biological role, catalyzes the isomerization between 2-isopropylmalate and 3-isopropylmalate, via the formation of 2-isopropylmaleate. The sequence is that of 3-isopropylmalate dehydratase small subunit from Bifidobacterium animalis subsp. lactis (strain AD011).